The primary structure comprises 99 residues: SAGA-associated factor 11 (99 aa).

The SGF11-type zinc finger occupies 71–92; sequence IHCENCGRDVSANRLAAHLQRC.

This sequence belongs to the SGF11 family. Component of the 1.8 MDa SAGA transcription coactivator-HAT complex. SAGA is built of 5 distinct domains with specialized functions. Within the SAGA complex, SUS1, SGF11, SGF73 and UBP8 form an additional subcomplex of SAGA called the DUB module (deubiquitination module). Interacts directly with SGF73, SUS1 and UBP8.

It is found in the nucleus. Its function is as follows. Functions as a component of the transcription regulatory histone acetylation (HAT) complex SAGA. At the promoters, SAGA is required for recruitment of the basal transcription machinery. It influences RNA polymerase II transcriptional activity through different activities such as TBP interaction and promoter selectivity, interaction with transcription activators, and chromatin modification through histone acetylation and deubiquitination. SAGA acetylates nucleosomal histone H3 to some extent (to form H3K9ac, H3K14ac, H3K18ac and H3K23ac). SAGA interacts with DNA via upstream activating sequences (UASs). Involved in transcriptional regulation of a subset of SAGA-regulated genes. Within the SAGA complex, participates in a subcomplex, that specifically deubiquitinates histones H2B. This is SAGA-associated factor 11 from Saccharomyces cerevisiae (strain RM11-1a) (Baker's yeast).